A 77-amino-acid chain; its full sequence is Acyl carrier protein (77 aa).

The region spanning 2–77 is the Carrier domain; the sequence is ASIEKRIKEI…DAIDYITDHT (76 aa). O-(pantetheine 4'-phosphoryl)serine is present on Ser37.

This sequence belongs to the acyl carrier protein (ACP) family. Post-translationally, 4'-phosphopantetheine is transferred from CoA to a specific serine of apo-ACP by AcpS. This modification is essential for activity because fatty acids are bound in thioester linkage to the sulfhydryl of the prosthetic group.

It localises to the cytoplasm. Its pathway is lipid metabolism; fatty acid biosynthesis. Carrier of the growing fatty acid chain in fatty acid biosynthesis. The sequence is that of Acyl carrier protein from Geobacter sp. (strain M21).